The chain runs to 62 residues: Small ribosomal subunit protein eS17 (62 aa).

The protein belongs to the eukaryotic ribosomal protein eS17 family.

The chain is Small ribosomal subunit protein eS17 from Methanoculleus marisnigri (strain ATCC 35101 / DSM 1498 / JR1).